Consider the following 274-residue polypeptide: Large ribosomal subunit protein uL2 (274 aa).

Disordered regions lie at residues 40–59 (SGGR…GGHK) and 223–274 (VAMN…RRSR). Composition is skewed to basic residues over residues 49-59 (VTRRHQGGGHK) and 256-274 (YRTR…RRSR).

This sequence belongs to the universal ribosomal protein uL2 family. Part of the 50S ribosomal subunit. Forms a bridge to the 30S subunit in the 70S ribosome.

Functionally, one of the primary rRNA binding proteins. Required for association of the 30S and 50S subunits to form the 70S ribosome, for tRNA binding and peptide bond formation. It has been suggested to have peptidyltransferase activity; this is somewhat controversial. Makes several contacts with the 16S rRNA in the 70S ribosome. This is Large ribosomal subunit protein uL2 from Acidithiobacillus ferrooxidans (strain ATCC 23270 / DSM 14882 / CIP 104768 / NCIMB 8455) (Ferrobacillus ferrooxidans (strain ATCC 23270)).